We begin with the raw amino-acid sequence, 1783 residues long: Chitin synthase A (1783 aa).

N-linked (GlcNAc...) asparagine glycosylation is found at asparagine 159, asparagine 637, asparagine 652, asparagine 664, and asparagine 669. Helical transmembrane passes span 745–765 (IWVA…LSFV) and 781–801 (LTLV…IVAF). Asparagine 1014 and asparagine 1018 each carry an N-linked (GlcNAc...) asparagine glycan. Residues 1051 to 1071 (IMLAMTIILCSVILVKFLAAL) form a helical membrane-spanning segment. The N-linked (GlcNAc...) asparagine glycan is linked to asparagine 1416. The next 3 helical transmembrane spans lie at 1441-1461 (FVVF…IYLG), 1474-1494 (FPII…LIFI), and 1502-1522 (IGWM…LPIY). N-linked (GlcNAc...) asparagine glycans are attached at residues asparagine 1529 and asparagine 1617. The segment at 1659–1724 (THDINRGQTP…SFDFQRGNMQ (66 aa)) is disordered. The span at 1664 to 1688 (RGQTPFQDFPSSRPSVSNLRGQANP) shows a compositional bias: polar residues. Residue asparagine 1695 is glycosylated (N-linked (GlcNAc...) asparagine). The region spanning 1725-1781 (GPDDSMIIEAIQGVLREVDLDTVTKKQVRALVEQRLQTGLVGERRTFMDRQIDNELA) is the DEK-C domain.

This sequence belongs to the chitin synthase family. Class V subfamily.

It localises to the cell membrane. It catalyses the reaction [(1-&gt;4)-N-acetyl-beta-D-glucosaminyl](n) + UDP-N-acetyl-alpha-D-glucosamine = [(1-&gt;4)-N-acetyl-beta-D-glucosaminyl](n+1) + UDP + H(+). Polymerizes chitin, a structural polymer of the cell wall and septum, by transferring the sugar moiety of UDP-GlcNAc to the non-reducing end of the growing chitin polymer. Responsible for about 29% of the chitin in conidial walls, is essential for conidial wall strength in media with high water potential and contributes to strength of hyphal tips. This Colletotrichum graminicola (Maize anthracnose fungus) protein is Chitin synthase A.